A 554-amino-acid chain; its full sequence is Chaperonin GroEL (554 aa).

Residues 30–33 (TLGP), Lys-51, 87–91 (DGTTT), Gly-415, 479–481 (NAA), and Asp-495 contribute to the ATP site.

The protein belongs to the chaperonin (HSP60) family. Forms a cylinder of 14 subunits composed of two heptameric rings stacked back-to-back. Interacts with the co-chaperonin GroES.

Its subcellular location is the cytoplasm. It carries out the reaction ATP + H2O + a folded polypeptide = ADP + phosphate + an unfolded polypeptide.. Functionally, together with its co-chaperonin GroES, plays an essential role in assisting protein folding. The GroEL-GroES system forms a nano-cage that allows encapsulation of the non-native substrate proteins and provides a physical environment optimized to promote and accelerate protein folding. This chain is Chaperonin GroEL, found in Nitrosococcus oceani (strain ATCC 19707 / BCRC 17464 / JCM 30415 / NCIMB 11848 / C-107).